The following is a 250-amino-acid chain: Small ribosomal subunit protein uS2 (250 aa).

Belongs to the universal ribosomal protein uS2 family.

This chain is Small ribosomal subunit protein uS2, found in Teredinibacter turnerae (strain ATCC 39867 / T7901).